The sequence spans 513 residues: Tigger transposable element-derived protein 4 (513 aa).

Residues 12 to 63 (PVTVKKKKSLSIEEKIDIINAVESGKKKAEIAAEYGIKKNSLSSIMKNKDKV) enclose the HTH psq-type domain. DNA-binding regions (H-T-H motif) lie at residues 39–59 (KAEI…IMKN) and 108–139 (PMLR…FKSR). The HTH CENPB-type domain maps to 75–146 (KRKRLRTAFY…KSRYGLVFRA (72 aa)). In terms of domain architecture, DDE-1 spans 174-375 (YHPKNVFNVK…VTPETIVKSY (202 aa)). Residues 433–448 (TQKDDAEWAGESKQDE) are compositionally biased toward basic and acidic residues. The interval 433-473 (TQKDDAEWAGESKQDETGLYTSDEEEEDSGALEVDLPSPSK) is disordered.

It belongs to the tigger transposable element derived protein family.

The protein resides in the nucleus. The sequence is that of Tigger transposable element-derived protein 4 (Tigd4) from Mus musculus (Mouse).